A 118-amino-acid polypeptide reads, in one-letter code: Large ribosomal subunit protein bL19 (118 aa).

Belongs to the bacterial ribosomal protein bL19 family.

Functionally, this protein is located at the 30S-50S ribosomal subunit interface and may play a role in the structure and function of the aminoacyl-tRNA binding site. This is Large ribosomal subunit protein bL19 from Geotalea uraniireducens (strain Rf4) (Geobacter uraniireducens).